A 420-amino-acid polypeptide reads, in one-letter code: LanC-like protein 3 (420 aa).

It belongs to the LanC-like protein family.

The polypeptide is LanC-like protein 3 (LANCL3) (Homo sapiens (Human)).